A 279-amino-acid polypeptide reads, in one-letter code: NH(3)-dependent NAD(+) synthetase (279 aa).

An ATP-binding site is contributed by 46–53 (GISGGQDS). Mg(2+) is bound at residue Asp-52. Arg-145 lines the deamido-NAD(+) pocket. Position 165 (Thr-165) interacts with ATP. Residue Glu-170 coordinates Mg(2+). Residues Lys-178 and Asp-185 each coordinate deamido-NAD(+). ATP-binding residues include Lys-194 and Thr-216. 265–266 (HK) contributes to the deamido-NAD(+) binding site.

The protein belongs to the NAD synthetase family. In terms of assembly, homodimer.

The catalysed reaction is deamido-NAD(+) + NH4(+) + ATP = AMP + diphosphate + NAD(+) + H(+). It functions in the pathway cofactor biosynthesis; NAD(+) biosynthesis; NAD(+) from deamido-NAD(+) (ammonia route): step 1/1. Catalyzes the ATP-dependent amidation of deamido-NAD to form NAD. Uses ammonia as a nitrogen source. This chain is NH(3)-dependent NAD(+) synthetase, found in Rhodococcus opacus (strain B4).